The sequence spans 157 residues: Thioredoxin 2 (157 aa).

Residues 1–22 (MKHILALVVFIISFFCFKDVNC) form the signal peptide. The Thioredoxin domain occupies 46 to 157 (LRMYNKMPRL…ELTSTIRKHL (112 aa)). Catalysis depends on nucleophile residues C82 and C85. C82 and C85 form a disulfide bridge.

It belongs to the thioredoxin family. Monomer. Component of the translocon PTEX complex composed of HSP101, EXP2, PTEX150, PTEX88 and TRX2. The disulfide bond between Cys-82 and Cys-85 acts as a redox-active center and is reduced by thioredoxin reductase TRXR.

In terms of biological role, participates in various redox reactions through the reversible oxidation of its active center dithiol to a disulfide and catalyzes dithiol-disulfide exchange reactions. As part of the translocon PTEX complex, plays a role in the export of parasite proteins into the host erythrocyte. The translocon PTEX complex is a multi-protein machinery resident in the parasite parasitophorous vacuolar membrane, responsible for protein secretion into host cells. May contribute to the unfolding of proteins containing the PEXEL localization motif before their passage through the translocon or regulate the PTEX complex function. In Plasmodium berghei (strain Anka), this protein is Thioredoxin 2.